Consider the following 158-residue polypeptide: Endoribonuclease YbeY (158 aa).

Zn(2+)-binding residues include histidine 119, histidine 123, and histidine 129.

The protein belongs to the endoribonuclease YbeY family. Zn(2+) is required as a cofactor.

The protein resides in the cytoplasm. Its function is as follows. Single strand-specific metallo-endoribonuclease involved in late-stage 70S ribosome quality control and in maturation of the 3' terminus of the 16S rRNA. This chain is Endoribonuclease YbeY, found in Shewanella woodyi (strain ATCC 51908 / MS32).